A 494-amino-acid chain; its full sequence is Cytochrome P450 2A13 (494 aa).

Asn-297 provides a ligand contact to substrate. A heme-binding site is contributed by Cys-439.

The protein belongs to the cytochrome P450 family. It depends on heme as a cofactor. In terms of tissue distribution, expressed in liver and a number of extrahepatic tissues, including nasal mucosa, lung, trachea, brain, mammary gland, prostate, testis, and uterus, but not in heart, kidney, bone marrow, colon, small intestine, spleen, stomach, thymus, or skeletal muscle.

Its subcellular location is the endoplasmic reticulum membrane. The protein localises to the microsome membrane. The catalysed reaction is an organic molecule + reduced [NADPH--hemoprotein reductase] + O2 = an alcohol + oxidized [NADPH--hemoprotein reductase] + H2O + H(+). Functionally, exhibits a coumarin 7-hydroxylase activity. Active in the metabolic activation of hexamethylphosphoramide, N,N-dimethylaniline, 2'-methoxyacetophenone, N-nitrosomethylphenylamine, and the tobacco-specific carcinogen, 4-(methylnitrosamino)-1-(3-pyridyl)-1-butanone. Possesses phenacetin O-deethylation activity. The chain is Cytochrome P450 2A13 (CYP2A13) from Homo sapiens (Human).